The following is a 93-amino-acid chain: Small integral membrane protein 36 (93 aa).

The helical transmembrane segment at 14-34 (LIILVASYVILLLVFLISCVL) threads the bilayer. The disordered stretch occupies residues 73 to 93 (PKGPGLSLGDPAPLGKKSTMV).

The protein resides in the membrane. The polypeptide is Small integral membrane protein 36 (Homo sapiens (Human)).